Here is a 1161-residue protein sequence, read N- to C-terminus: Type IV pilus biogenesis factor PilY1 (1161 aa).

An N-terminal signal peptide occupies residues 1–30; sequence MKSVLHQIGKTSLAAALSGAVLLSAQTTHA. Ca(2+) contacts are provided by D598, D600, N602, and D606. Residues 617-619 form an integrin-binding motif RGD region; it reads RGD. Ca(2+) contacts are provided by D849, N851, D853, V855, and D857. Residues 1136–1161 form a disordered region; that stretch reads SGECLTVNPGPNTRGRQNWRPIEGKN.

Belongs to the PilY1 family. In terms of assembly, interacts (via C-terminus) with host integrins alpha-V/beta-3 (ITGAV/ITGB3) and alpha-V/beta-5 (ITGAV/ITGB5).

The protein resides in the fimbrium. The protein localises to the membrane. It is found in the cytoplasm. It localises to the cytosol. In terms of biological role, involved in pilus assembly, twitching motility and adhesion to host cells. Primes type IV pili (T4P) assembly and is required for inclusion of minor pilins PilV, PilW and PilX to the surface pili. Stabilizes assembled pilus fibers likely by antagonizing retraction mediated by PilT. Calcium-binding and calcium release by PilY1 seem to be essential for twitching motility and for regulation of pilus retraction dynamics of PilT. This is Type IV pilus biogenesis factor PilY1 from Pseudomonas aeruginosa (strain ATCC 15692 / DSM 22644 / CIP 104116 / JCM 14847 / LMG 12228 / 1C / PRS 101 / PAO1).